Reading from the N-terminus, the 163-residue chain is Phosphopantetheine adenylyltransferase (163 aa).

Ser10 contributes to the substrate binding site. Residues 10–11 (SF) and His18 each bind ATP. Substrate is bound by residues Lys42, Leu74, and Arg88. ATP contacts are provided by residues 89-91 (GLR), Glu99, and 124-130 (YSFLSSS).

Belongs to the bacterial CoaD family. Homohexamer. The cofactor is Mg(2+).

The protein resides in the cytoplasm. It catalyses the reaction (R)-4'-phosphopantetheine + ATP + H(+) = 3'-dephospho-CoA + diphosphate. Its pathway is cofactor biosynthesis; coenzyme A biosynthesis; CoA from (R)-pantothenate: step 4/5. Reversibly transfers an adenylyl group from ATP to 4'-phosphopantetheine, yielding dephospho-CoA (dPCoA) and pyrophosphate. This is Phosphopantetheine adenylyltransferase from Bacillus mycoides (strain KBAB4) (Bacillus weihenstephanensis).